The chain runs to 208 residues: CASP-like protein 1D1 (208 aa).

Positions 1 to 36 (MSSVDTEKPAPPPLETEAPPPPPPPPPPPPPPPPPP) are disordered. Residues 1 to 41 (MSSVDTEKPAPPPLETEAPPPPPPPPPPPPPPPPPPAGYSA) lie on the Cytoplasmic side of the membrane. Residues 9-36 (PAPPPLETEAPPPPPPPPPPPPPPPPPP) are compositionally biased toward pro residues. The helical transmembrane segment at 42–62 (LDVVLRILLLGSAVASVVVMV) threads the bilayer. The Extracellular portion of the chain corresponds to 63–89 (TSVQTKLIAVAGVPVLVSNKAKFQNSP). A helical membrane pass occupies residues 90–110 (AFIYFVAALSVVGLYSIITTL). At 111–133 (ASFIFISKPSCSTKTILHLAIWD) the chain is on the cytoplasmic side. A helical transmembrane segment spans residues 134–154 (VLMLGLAASATGTAGGVAYVG). The Extracellular portion of the chain corresponds to 155 to 180 (LKGNSHVGWNKVCNTYDKFCRHVGGS). A helical membrane pass occupies residues 181-201 (IAVALFASILLVLLVWLSLFT). At 202–208 (LYSRIRK) the chain is on the cytoplasmic side.

This sequence belongs to the Casparian strip membrane proteins (CASP) family. Homodimer and heterodimers.

Its subcellular location is the cell membrane. In Vitis vinifera (Grape), this protein is CASP-like protein 1D1.